A 177-amino-acid polypeptide reads, in one-letter code: UPF0114 protein HP_0189 (177 aa).

3 helical membrane-spanning segments follow: residues 15–35 (WLLAPLCIAMSLVLVVLGYVF), 54–74 (LVLSALGLVDLLFMAGLVLMV), and 145–165 (PIFWQVVIHLVFVCSALLAAV).

Belongs to the UPF0114 family.

Its subcellular location is the cell membrane. The sequence is that of UPF0114 protein HP_0189 from Helicobacter pylori (strain ATCC 700392 / 26695) (Campylobacter pylori).